A 677-amino-acid polypeptide reads, in one-letter code: Sulfate transporter 2.2 (677 aa).

Residues 1–110 are Cytoplasmic-facing; sequence MQLSSLSHTS…QYKLNLFKKD (110 aa). The helical transmembrane segment at 111-131 threads the bilayer; that stretch reads LMAGLTLASLCIPQSIGYANL. At 132–133 the chain is on the extracellular side; sequence AG. A helical membrane pass occupies residues 134–154; sequence LDPEYGLYTSVVPPLIYSTMG. Residues 155–158 lie on the Cytoplasmic side of the membrane; that stretch reads TSRE. Residues 159-179 traverse the membrane as a helical segment; sequence LAIGPVAVVSLLLSSMVRDLQ. The Extracellular segment spans residues 180-190; the sequence is DPVTDPIAYRK. The chain crosses the membrane as a helical span at residues 191-211; sequence IVFTVTFFAGAFQAIFGLFRL. The Cytoplasmic portion of the chain corresponds to 212–213; sequence GF. The helical transmembrane segment at 214–234 threads the bilayer; it reads LVDFLSHAALVGFMAGAAIVI. Residues 235–270 are Extracellular-facing; sequence GLQQLKGLFGLTHFTNKTDVVSVLSSVFHSLHHPWQ. The N-linked (GlcNAc...) asparagine glycan is linked to Asn250. The helical transmembrane segment at 271–291 threads the bilayer; sequence PLNFVIGSSFLIFILLARFIG. At 292–296 the chain is on the cytoplasmic side; that stretch reads KRNNK. A helical membrane pass occupies residues 297-317; it reads LFWIPAMAPLISVVLATLIVY. The Extracellular segment spans residues 318-352; it reads LSNAESRGVKIVKHIKPGFNQLSVNQLQFKSPHLG. The helical transmembrane segment at 353–373 threads the bilayer; that stretch reads QIAKIGLISAIIALTEAIAVG. Residues 374-389 are Cytoplasmic-facing; sequence RSFATIKGYRLDGNKE. Residues 390 to 410 form a helical membrane-spanning segment; it reads MMAMGFMNIAGSLSSCYVATG. The Extracellular portion of the chain corresponds to 411–422; sequence SFSRTAVNFSAG. An N-linked (GlcNAc...) asparagine glycan is attached at Asn418. A helical membrane pass occupies residues 423-443; sequence CETVVSNIVMAITVMISLEVL. Residues 444–446 are Cytoplasmic-facing; that stretch reads TRF. The chain crosses the membrane as a helical span at residues 447–467; sequence LYFTPTAILASIILSALPGLI. At 468 to 482 the chain is on the extracellular side; it reads DVSGALHIWKLDKLD. The chain crosses the membrane as a helical span at residues 483-503; it reads FLVLIAAFFGVLFASVEIGLL. At 504-677 the chain is on the cytoplasmic side; sequence LAVGISFARI…RARSTSHELC (174 aa). In terms of domain architecture, STAS spans 540–666; the sequence is YPMANKTAGL…MTVGEAVDIY (127 aa).

The protein belongs to the SLC26A/SulP transporter (TC 2.A.53) family. Expressed in the phloem in roots and in the phloem of vascular bundles in leaves.

It localises to the membrane. Its function is as follows. Low-affinity H(+)/sulfate cotransporter that may be involved in the distribution of sulfate from vascular bundles to the palisade cells of the leaves. Plays a central role in the regulation of sulfate assimilation. The sequence is that of Sulfate transporter 2.2 (SULTR2;2) from Arabidopsis thaliana (Mouse-ear cress).